Here is a 368-residue protein sequence, read N- to C-terminus: Aspartate-semialdehyde dehydrogenase (368 aa).

Residues 10-13, 37-38, and Q74 each bind NADP(+); these read RGMV and TS. A phosphate-binding site is contributed by R103. The active-site Acyl-thioester intermediate is C136. C136 carries the S-cysteinyl cysteine; in inhibited form modification. Residue Q163 coordinates substrate. Residues 166–167 and P194 contribute to the NADP(+) site; that span reads SG. E242 is a substrate binding site. K245 provides a ligand contact to phosphate. Residue R268 participates in substrate binding. Catalysis depends on H275, which acts as the Proton acceptor. NADP(+) is bound at residue Q351.

Belongs to the aspartate-semialdehyde dehydrogenase family. Homodimer.

The catalysed reaction is L-aspartate 4-semialdehyde + phosphate + NADP(+) = 4-phospho-L-aspartate + NADPH + H(+). Its pathway is amino-acid biosynthesis; L-lysine biosynthesis via DAP pathway; (S)-tetrahydrodipicolinate from L-aspartate: step 2/4. It functions in the pathway amino-acid biosynthesis; L-methionine biosynthesis via de novo pathway; L-homoserine from L-aspartate: step 2/3. The protein operates within amino-acid biosynthesis; L-threonine biosynthesis; L-threonine from L-aspartate: step 2/5. Catalyzes the NADPH-dependent formation of L-aspartate-semialdehyde (L-ASA) by the reductive dephosphorylation of L-aspartyl-4-phosphate. This chain is Aspartate-semialdehyde dehydrogenase, found in Salmonella typhi.